Here is a 382-residue protein sequence, read N- to C-terminus: PqqA peptide cyclase (382 aa).

Positions 8–223 (VKPPLWLLAE…VHRYREKMAA (216 aa)) constitute a Radical SAM core domain. 3 residues coordinate [4Fe-4S] cluster: cysteine 22, cysteine 26, and cysteine 29.

Belongs to the radical SAM superfamily. PqqE family. In terms of assembly, interacts with PqqD. The interaction is necessary for activity of PqqE. It depends on [4Fe-4S] cluster as a cofactor.

It catalyses the reaction [PQQ precursor protein] + S-adenosyl-L-methionine = E-Y cross-linked-[PQQ precursor protein] + 5'-deoxyadenosine + L-methionine + H(+). Its pathway is cofactor biosynthesis; pyrroloquinoline quinone biosynthesis. Functionally, catalyzes the cross-linking of a glutamate residue and a tyrosine residue in the PqqA protein as part of the biosynthesis of pyrroloquinoline quinone (PQQ). In Erwinia tasmaniensis (strain DSM 17950 / CFBP 7177 / CIP 109463 / NCPPB 4357 / Et1/99), this protein is PqqA peptide cyclase.